Reading from the N-terminus, the 231-residue chain is 7-cyano-7-deazaguanine synthase (231 aa).

An ATP-binding site is contributed by 8 to 18; sequence FSGGQDSTTCL. Zn(2+) contacts are provided by cysteine 188, cysteine 197, cysteine 200, and cysteine 203.

The protein belongs to the QueC family. The cofactor is Zn(2+).

It catalyses the reaction 7-carboxy-7-deazaguanine + NH4(+) + ATP = 7-cyano-7-deazaguanine + ADP + phosphate + H2O + H(+). The protein operates within purine metabolism; 7-cyano-7-deazaguanine biosynthesis. Catalyzes the ATP-dependent conversion of 7-carboxy-7-deazaguanine (CDG) to 7-cyano-7-deazaguanine (preQ(0)). The sequence is that of 7-cyano-7-deazaguanine synthase from Pectobacterium carotovorum subsp. carotovorum (strain PC1).